Reading from the N-terminus, the 426-residue chain is Putative acid phosphatase 1 (426 aa).

Residues 1–18 form the signal peptide; the sequence is MRVLFYVFPFVIFALSQA. Residues 19-388 lie on the Extracellular side of the membrane; that stretch reads QLISVHVIFR…HNWTMTTVSW (370 aa). Catalysis depends on His29, which acts as the Nucleophile. Asn37 and Asn145 each carry an N-linked (GlcNAc...) asparagine glycan. Cys133 and Cys369 are disulfide-bonded. Asp276 acts as the Proton donor in catalysis. Asn380 carries an N-linked (GlcNAc...) asparagine glycan. Residues 389 to 409 form a helical membrane-spanning segment; the sequence is ILIGISAFLLIILIIMSYLAV. The Cytoplasmic portion of the chain corresponds to 410 to 426; sequence RYKNRSVVTIKKVCLEN.

This sequence belongs to the histidine acid phosphatase family.

Its subcellular location is the membrane. It catalyses the reaction a phosphate monoester + H2O = an alcohol + phosphate. The chain is Putative acid phosphatase 1 from Caenorhabditis briggsae.